A 246-amino-acid chain; its full sequence is Zinc import ATP-binding protein ZnuC (246 aa).

Residues 24 to 243 enclose the ABC transporter domain; it reads LKIENLALAY…RTLNEIFSSY (220 aa). 56 to 63 contributes to the ATP binding site; sequence GPNGGGKT.

Belongs to the ABC transporter superfamily. Zinc importer (TC 3.A.1.15.5) family. As to quaternary structure, the complex is composed of two ATP-binding proteins (ZnuC), two transmembrane proteins (ZnuB) and a solute-binding protein (ZnuA).

It localises to the cell membrane. The enzyme catalyses Zn(2+)(out) + ATP(in) + H2O(in) = Zn(2+)(in) + ADP(in) + phosphate(in) + H(+)(in). Part of the ABC transporter complex ZnuABC involved in zinc import. Responsible for energy coupling to the transport system. The sequence is that of Zinc import ATP-binding protein ZnuC from Wolbachia pipientis wMel.